The following is a 184-amino-acid chain: Nucleoporin-62 C-terminal-like protein (184 aa).

Residues 117–151 (RILHGEVNKVKLDQKRLEQELDFILSQQQELEFLL) are a coiled coil.

Belongs to the nucleoporin NSP1/NUP62 family.

The sequence is that of Nucleoporin-62 C-terminal-like protein (NUP62CL) from Homo sapiens (Human).